The following is a 522-amino-acid chain: Protein nucleotidyltransferase YdiU (522 aa).

ATP is bound by residues Gly109, Gly111, Arg112, Lys132, Asp144, Gly145, Arg195, and Arg202. Asp271 functions as the Proton acceptor in the catalytic mechanism. Mg(2+) contacts are provided by Asn272 and Asp281. Asp281 lines the ATP pocket.

It belongs to the SELO family. The cofactor is Mg(2+). Requires Mn(2+) as cofactor.

It catalyses the reaction L-seryl-[protein] + ATP = 3-O-(5'-adenylyl)-L-seryl-[protein] + diphosphate. The enzyme catalyses L-threonyl-[protein] + ATP = 3-O-(5'-adenylyl)-L-threonyl-[protein] + diphosphate. The catalysed reaction is L-tyrosyl-[protein] + ATP = O-(5'-adenylyl)-L-tyrosyl-[protein] + diphosphate. It carries out the reaction L-histidyl-[protein] + UTP = N(tele)-(5'-uridylyl)-L-histidyl-[protein] + diphosphate. It catalyses the reaction L-seryl-[protein] + UTP = O-(5'-uridylyl)-L-seryl-[protein] + diphosphate. The enzyme catalyses L-tyrosyl-[protein] + UTP = O-(5'-uridylyl)-L-tyrosyl-[protein] + diphosphate. Functionally, nucleotidyltransferase involved in the post-translational modification of proteins. It can catalyze the addition of adenosine monophosphate (AMP) or uridine monophosphate (UMP) to a protein, resulting in modifications known as AMPylation and UMPylation. This chain is Protein nucleotidyltransferase YdiU, found in Burkholderia vietnamiensis (strain G4 / LMG 22486) (Burkholderia cepacia (strain R1808)).